We begin with the raw amino-acid sequence, 426 residues long: MTQMTDAKSGITTEEMKFVAKEEGMDVETFKNLIAKGYVVIPKNVNRNTKPVGIGDNLRTKVNVNLGTSPDFIDIACELKKVEISNKYGADAIMDLSTGGNLPEIRKEIIKNTNLPIGTVPIYEVGADAKAKYGRVIDMDEDLIFNVIERQAKEGVDFMTLHCGITKQTVSALNNDPRKMGVVSRGGAFLTAYIMYHDKENPLYKEFDYLLELLKEHDVTLSLGDGMRPGCLQDNTDRAQIQELITLGELVDKCREKGVQVMVEGPGHVPYNNIEANMKIQKTLCKNAPFYVLGPIVTDLAPGYDHITAAIGGTLAAVSGANFLCYVTPAEHVRLMKEDDVKEGLIASKIAAQAADVAKGHSIAWKLEKEMADARMKHDWEKQFEIALDSDKPGKMREEIPSKDEKACSVCGDYCALLMVEELGKR.

Residues N65, M94, Y123, H162, 184 to 186 (SRG), 225 to 228 (DGMR), and E264 each bind substrate. H268 contacts Zn(2+). Y291 contributes to the substrate binding site. H332 provides a ligand contact to Zn(2+). 3 residues coordinate [4Fe-4S] cluster: C408, C411, and C415.

The protein belongs to the ThiC family. Requires [4Fe-4S] cluster as cofactor.

It carries out the reaction 5-amino-1-(5-phospho-beta-D-ribosyl)imidazole + S-adenosyl-L-methionine = 4-amino-2-methyl-5-(phosphooxymethyl)pyrimidine + CO + 5'-deoxyadenosine + formate + L-methionine + 3 H(+). It participates in cofactor biosynthesis; thiamine diphosphate biosynthesis. Its function is as follows. Catalyzes the synthesis of the hydroxymethylpyrimidine phosphate (HMP-P) moiety of thiamine from aminoimidazole ribotide (AIR) in a radical S-adenosyl-L-methionine (SAM)-dependent reaction. In Methanococcus maripaludis (strain C5 / ATCC BAA-1333), this protein is Phosphomethylpyrimidine synthase.